The following is a 289-amino-acid chain: Ribosomal RNA small subunit methyltransferase H (289 aa).

S-adenosyl-L-methionine contacts are provided by residues G40–H42, D60, F84, D106, and Q113.

It belongs to the methyltransferase superfamily. RsmH family.

Its subcellular location is the cytoplasm. The catalysed reaction is cytidine(1402) in 16S rRNA + S-adenosyl-L-methionine = N(4)-methylcytidine(1402) in 16S rRNA + S-adenosyl-L-homocysteine + H(+). Functionally, specifically methylates the N4 position of cytidine in position 1402 (C1402) of 16S rRNA. In Haemophilus influenzae (strain PittGG), this protein is Ribosomal RNA small subunit methyltransferase H.